We begin with the raw amino-acid sequence, 107 residues long: Proteinase inhibitor 1 (107 aa).

The first 23 residues, 1 to 23 (MELKFAHIIVFFLLATSFETLMA), serve as a signal peptide directing secretion. A propeptide spanning residues 24 to 36 (RKESDGPEVIQLL) is cleaved from the precursor.

The protein belongs to the protease inhibitor I13 (potato type I serine protease inhibitor) family.

This is Proteinase inhibitor 1 from Solanum tuberosum (Potato).